Reading from the N-terminus, the 94-residue chain is Small ribosomal subunit protein bS18 (94 aa).

This sequence belongs to the bacterial ribosomal protein bS18 family. Part of the 30S ribosomal subunit. Forms a tight heterodimer with protein bS6.

Binds as a heterodimer with protein bS6 to the central domain of the 16S rRNA, where it helps stabilize the platform of the 30S subunit. The protein is Small ribosomal subunit protein bS18 of Polaromonas naphthalenivorans (strain CJ2).